The primary structure comprises 104 residues: uncharacterized protein (104 aa).

This is an uncharacterized protein from Haemophilus influenzae (strain ATCC 51907 / DSM 11121 / KW20 / Rd).